The primary structure comprises 417 residues: NADH-quinone oxidoreductase subunit D (417 aa).

It belongs to the complex I 49 kDa subunit family. In terms of assembly, NDH-1 is composed of 14 different subunits. Subunits NuoB, C, D, E, F, and G constitute the peripheral sector of the complex.

It localises to the cell inner membrane. The enzyme catalyses a quinone + NADH + 5 H(+)(in) = a quinol + NAD(+) + 4 H(+)(out). Its function is as follows. NDH-1 shuttles electrons from NADH, via FMN and iron-sulfur (Fe-S) centers, to quinones in the respiratory chain. The immediate electron acceptor for the enzyme in this species is believed to be ubiquinone. Couples the redox reaction to proton translocation (for every two electrons transferred, four hydrogen ions are translocated across the cytoplasmic membrane), and thus conserves the redox energy in a proton gradient. This Nitrosospira multiformis (strain ATCC 25196 / NCIMB 11849 / C 71) protein is NADH-quinone oxidoreductase subunit D.